The chain runs to 224 residues: Ribonuclease HII (224 aa).

An RNase H type-2 domain is found at 1–219 (MMIAGIDEAG…VENIREELKK (219 aa)). Aspartate 7, glutamate 8, and aspartate 105 together coordinate a divalent metal cation.

The protein belongs to the RNase HII family. Mn(2+) serves as cofactor. Mg(2+) is required as a cofactor.

It localises to the cytoplasm. It catalyses the reaction Endonucleolytic cleavage to 5'-phosphomonoester.. In terms of biological role, endonuclease that specifically degrades the RNA of RNA-DNA hybrids. The chain is Ribonuclease HII from Methanosarcina barkeri (strain Fusaro / DSM 804).